Here is a 492-residue protein sequence, read N- to C-terminus: MTLWINGDWITGQGASRVKRNPVSGEVLWQGNDADAAQVGQACRAARAAFPRWARLSFAERQAVVERFAGLLERNKGELTAIIARETGKPRWEAATELTAMINKIAISIKAYHVRTGEQRSEMPDGAASLRHRPHGVLAVFGPYNFPGHLPNGHIVPALLAGNTIIFKPSELTPWSGEAVMRLWQQAGLPPGVLNLVQGGCETGQALSALEDLDGLLFTGSANTGYQLHRQLSGQPEKILALEMGGNNPLIIDEVADIDAAVHLTIQSAFVTAGQRCTCARRVLLKSGAQGDAFLARLVAVSQRLTPGNWDDEPQPFIGGLISEQAAQQVFTAWQQLEAMGGRTLLAPRLLQAGTSLLTPGIIEMTGVAGVPDEEVFGPLLRVWRYDSFEEAIRMANNTRFGLSCGLVSPEREKFDQLLLEARAGIVNWNKPLTGAASTAPFGGIGASGNHRPSAWYAADYCAWPMASLESDSLTLPATLNPGLDFSDEVVR.

Residue 220–225 (GSANTG) participates in NAD(+) binding. Residues Glu-243 and Cys-277 contribute to the active site.

It belongs to the aldehyde dehydrogenase family. AstD subfamily.

The enzyme catalyses N-succinyl-L-glutamate 5-semialdehyde + NAD(+) + H2O = N-succinyl-L-glutamate + NADH + 2 H(+). It functions in the pathway amino-acid degradation; L-arginine degradation via AST pathway; L-glutamate and succinate from L-arginine: step 4/5. Functionally, catalyzes the NAD-dependent reduction of succinylglutamate semialdehyde into succinylglutamate. This chain is N-succinylglutamate 5-semialdehyde dehydrogenase, found in Escherichia coli O157:H7.